Here is a 247-residue protein sequence, read N- to C-terminus: Type III pantothenate kinase (247 aa).

7–14 (AIGNSRWH) lines the ATP pocket. Residues Y91 and 95 to 98 (GLDR) each bind substrate. The Proton acceptor role is filled by D97. D117 contributes to the K(+) binding site. Residue T120 participates in ATP binding. T172 contacts substrate.

The protein belongs to the type III pantothenate kinase family. In terms of assembly, homodimer. NH4(+) serves as cofactor. The cofactor is K(+).

It localises to the cytoplasm. It carries out the reaction (R)-pantothenate + ATP = (R)-4'-phosphopantothenate + ADP + H(+). It functions in the pathway cofactor biosynthesis; coenzyme A biosynthesis; CoA from (R)-pantothenate: step 1/5. In terms of biological role, catalyzes the phosphorylation of pantothenate (Pan), the first step in CoA biosynthesis. This Synechococcus elongatus (strain ATCC 33912 / PCC 7942 / FACHB-805) (Anacystis nidulans R2) protein is Type III pantothenate kinase.